A 268-amino-acid chain; its full sequence is Hydroxyethylthiazole kinase (268 aa).

Met47 contributes to the substrate binding site. ATP contacts are provided by Lys123 and Thr170. Ala196 lines the substrate pocket.

It belongs to the Thz kinase family. The cofactor is Mg(2+).

The enzyme catalyses 5-(2-hydroxyethyl)-4-methylthiazole + ATP = 4-methyl-5-(2-phosphooxyethyl)-thiazole + ADP + H(+). Its pathway is cofactor biosynthesis; thiamine diphosphate biosynthesis; 4-methyl-5-(2-phosphoethyl)-thiazole from 5-(2-hydroxyethyl)-4-methylthiazole: step 1/1. Functionally, catalyzes the phosphorylation of the hydroxyl group of 4-methyl-5-beta-hydroxyethylthiazole (THZ). This is Hydroxyethylthiazole kinase from Finegoldia magna (strain ATCC 29328 / DSM 20472 / WAL 2508) (Peptostreptococcus magnus).